Consider the following 378-residue polypeptide: Acetylornithine deacetylase (378 aa).

His76 serves as a coordination point for Zn(2+). Asp78 is a catalytic residue. Position 108 (Asp108) interacts with Zn(2+). Glu140 is an active-site residue. 3 residues coordinate Zn(2+): Glu141, Glu165, and His351.

This sequence belongs to the peptidase M20A family. ArgE subfamily. In terms of assembly, homodimer. Zn(2+) serves as cofactor. Co(2+) is required as a cofactor. Requires glutathione as cofactor.

It is found in the cytoplasm. It catalyses the reaction N(2)-acetyl-L-ornithine + H2O = L-ornithine + acetate. The protein operates within amino-acid biosynthesis; L-arginine biosynthesis; L-ornithine from N(2)-acetyl-L-ornithine (linear): step 1/1. Catalyzes the hydrolysis of the amide bond of N(2)-acetylated L-amino acids. Cleaves the acetyl group from N-acetyl-L-ornithine to form L-ornithine, an intermediate in L-arginine biosynthesis pathway, and a branchpoint in the synthesis of polyamines. The polypeptide is Acetylornithine deacetylase (Vibrio parahaemolyticus serotype O3:K6 (strain RIMD 2210633)).